The chain runs to 163 residues: Jun dimerization protein 2 (163 aa).

Disordered regions lie at residues 1-20 and 59-89; these read MMPGQIPDPSVTAGSLPGLG and KRPQPVKSELDEEEERRKRRREKNKVAAARC. Lys-65 is covalently cross-linked (Glycyl lysine isopeptide (Lys-Gly) (interchain with G-Cter in SUMO2)). The bZIP domain maps to 72–135; the sequence is EERRKRRREK…QQLILMLNRH (64 aa). A basic motif region spans residues 74–96; the sequence is RRKRRREKNKVAAARCRNKKKER. The tract at residues 100–128 is leucine-zipper; it reads LQRESERLELMNAELKTQIEELKLERQQL. The residue at position 148 (Thr-148) is a Phosphothreonine; by MAPK8.

It belongs to the bZIP family. ATF subfamily. Forms a homodimer or heterodimer with JUN, JUNB, JUND, CEBPG and ATF2 thereby inhibiting transactivation by JUN, ATF2 and CEBPG. Binds multiple DNA elements such as cAMP-response element (CRE) and TPA response element (TRE) either as homodimer or heterodimer. Interacts with IRF2BP1. In terms of processing, phosphorylation of Thr-148 by MAPK8 in response to different stress conditions such as, UV irradiation, oxidatives stress and anisomycin treatments. Post-translationally, polyubiquitinated; probably by IRF2BP1. Ubiquitously expressed in all adult tissues tested as well in embryos.

It is found in the nucleus. Functionally, component of the AP-1 transcription factor that represses transactivation mediated by the Jun family of proteins. Involved in a variety of transcriptional responses associated with AP-1, such as UV-induced apoptosis, cell differentiation, tumorigenesis and antitumogeneris. Can also function as a repressor by recruiting histone deacetylase 3/HDAC3 to the promoter region of JUN. May control transcription via direct regulation of the modification of histones and the assembly of chromatin. The chain is Jun dimerization protein 2 (Jdp2) from Mus musculus (Mouse).